The chain runs to 356 residues: Viral cathepsin (356 aa).

The first 40 residues, 1–40, serve as a signal peptide directing secretion; sequence MYANALVCLNPSFIKLQFHIVCTMNIIGIVTLALCSAASA. The propeptide at 41–144 is activation peptide; the sequence is ADEGAAYNLQ…IILNQPPDKG (104 aa). 3 disulfide bridges follow: cysteine 165-cysteine 206, cysteine 199-cysteine 239, and cysteine 295-cysteine 343. Residue cysteine 168 is part of the active site. Active-site residues include histidine 302 and asparagine 322.

The protein belongs to the peptidase C1 family. Post-translationally, synthesized as an inactive proenzyme and activated by proteolytic removal of the inhibitory propeptide.

The catalysed reaction is Endopeptidase of broad specificity, hydrolyzing substrates of both cathepsin L and cathepsin B.. Cysteine protease that plays an essential role in host liquefaction to facilitate horizontal transmission of the virus. May participate in the degradation of foreign protein expressed by the baculovirus system. The sequence is that of Viral cathepsin (VCATH) from Lepidoptera (butterflies and moths).